The sequence spans 683 residues: Stromal interaction molecule 1 (683 aa).

The first 22 residues, 1 to 22, serve as a signal peptide directing secretion; that stretch reads MDVCARLALWLLWGLLLHHGQS. At 23-211 the chain is on the extracellular side; sequence LSQSHSEKAT…LLTRHNHLKD (189 aa). EF-hand domains follow at residues 62 to 95 and 100 to 124; these read SFDA…EDLN and TVKH…AWKS. Ca(2+) is bound by residues Asp-74, Asp-76, Asn-78, Asp-80, and Glu-85. N-linked (GlcNAc...) asparagine glycans are attached at residues Asn-129 and Asn-169. One can recognise an SAM domain in the interval 130-198; it reads WTVDEVVQWL…QLKALDTVLF (69 aa). A helical transmembrane segment spans residues 212–232; that stretch reads FMLVVSIVIGVGGCWFAYIQN. Topologically, residues 233–683 are cytoplasmic; the sequence is RYSKEHMKKM…LKIFKKPLKK (451 aa). Residues 246–440 are a coiled coil; it reads LEGLHRAEQS…IEILCGFQIV (195 aa). Residue Ser-255 is modified to Phosphoserine. Positions 342–440 are SOAR/CAD; it reads PEALQKWLQL…IEILCGFQIV (99 aa). The interval 473–481 is contributes to fast Ca(2+)-dependent inactivation of CRAC channels; sequence DDVDDMDEE. Residues 488–497 are compositionally biased toward low complexity; sequence MQSPSLQSSV. Positions 488–535 are disordered; sequence MQSPSLQSSVRQRLTEPQHGLGSQRDLTHSDSESSLHMSDRQRLAPKP. Thr-502 is modified (phosphothreonine). Phosphoserine is present on Ser-510. Over residues 513–530 the composition is skewed to basic and acidic residues; that stretch reads DLTHSDSESSLHMSDRQR. A Phosphothreonine modification is found at Thr-515. A phosphoserine mark is found at Ser-517, Ser-519, Ser-521, Ser-522, Ser-565, Ser-573, Ser-606, Ser-616, and Ser-626. A disordered region spans residues 597–683; the sequence is LSSPALPSGS…LKIFKKPLKK (87 aa). The Microtubule tip localization signal signature appears at 640 to 643; it reads TRIP. The span at 653–664 shows a compositional bias: acidic residues; it reads EEDNGSIGEETD. Phosphoserine is present on Ser-658. A Phosphothreonine modification is found at Thr-663. Ser-666 is subject to Phosphoserine. Basic residues predominate over residues 668-683; that stretch reads GRKKFPLKIFKKPLKK. Positions 670-683 are required for generation of inwardly rectifying CRAC currents; that stretch reads KKFPLKIFKKPLKK.

As to quaternary structure, monomer in the presence of Ca(2+). It oligomerizes in absence of Ca(2+). Forms homooligomers and heterooligomers with STIM2. Interacts with pore-forming subunits of CRAC channels, ORAI1, ORAI2 and ORAI3; this interaction is potentiated upon Ca(2+) store depletion. Interacts (via the transmembrane region and the SOAR/CAD domain) with SPPL3; the interaction promotes the binding of STIM1 to ORAI1. Interacts with ORAI1. Interacts with MAPRE1; probably required for targeting to the growing microtubule plus ends. Interacts with CRACR2A/EFCAB4B; the interaction is direct and takes place in absence of Ca(2+). Forms a complex with CRACR2A/EFCAB4B and ORAI1 at low concentration of Ca(2+), the complex dissociates at elevated Ca(2+) concentrations. Interacts with SARAF, promoting a slow inactivation of STIM1-dependent SOCE activity, possibly by facilitating the deoligomerization of STIM1. Interacts with EFHB; the interaction takes place upon Ca(2+)-store depletion and inhibits the association with SARAF. Interacts with ASPH. Interacts with SLC35G1; intracellular Ca(2+)-dependent. May interact with ATP1A1, ATP2A2, ATP2B1, ATP2B4, KPNB1 and XPO1; through SLC35G1. Interacts with TMEM203. Interacts with STIMATE, promoting STIM1 conformational switch. Interacts with TMEM178A. Interacts with CASQ1 (via C-terminal end and preferentially with the monomeric form); this interaction increases in response to a depletion of intracellular calcium, decreases both STIM1 aggregation and clustering, interaction of STIM1 with ORAI1 and store-operated Ca(2+) entry (SOCE) activity. Post-translationally, glycosylation is required for cell surface expression. Phosphorylated predominantly on Ser residues.

Its subcellular location is the cell membrane. It is found in the endoplasmic reticulum membrane. It localises to the sarcoplasmic reticulum. The protein localises to the cytoplasm. The protein resides in the cytoskeleton. Functionally, acts as a Ca(2+) sensor that gates two major inward rectifying Ca(2+) channels at the plasma membrane: Ca(2+) release-activated Ca(2+) (CRAC) channels and arachidonate-regulated Ca(2+)-selective (ARC) channels. Plays a role in mediating store-operated Ca(2+) entry (SOCE), a Ca(2+) influx following depletion of intracellular Ca(2+) stores. Upon Ca(2+) depletion, translocates from the endoplasmic reticulum to the plasma membrane where it activates CRAC channel pore-forming subunits ORA1, ORA2 and ORAI3 to generate sustained and oscillatory Ca(2+) entry. Involved in enamel formation. In Bos taurus (Bovine), this protein is Stromal interaction molecule 1 (STIM1).